A 69-amino-acid polypeptide reads, in one-letter code: DNA gyrase inhibitor YacG (69 aa).

Residues Cys-7, Cys-10, Cys-26, and Cys-30 each coordinate Zn(2+).

Belongs to the DNA gyrase inhibitor YacG family. As to quaternary structure, interacts with GyrB. Zn(2+) is required as a cofactor.

Its function is as follows. Inhibits all the catalytic activities of DNA gyrase by preventing its interaction with DNA. Acts by binding directly to the C-terminal domain of GyrB, which probably disrupts DNA binding by the gyrase. The polypeptide is DNA gyrase inhibitor YacG (Shewanella sp. (strain ANA-3)).